Consider the following 422-residue polypeptide: Ribosomal RNA small subunit methyltransferase B (422 aa).

Residues 254 to 260 (CAAPGGK), Asp-277, Asp-303, and Asp-322 each bind S-adenosyl-L-methionine. Catalysis depends on Cys-375, which acts as the Nucleophile.

This sequence belongs to the class I-like SAM-binding methyltransferase superfamily. RsmB/NOP family.

Its subcellular location is the cytoplasm. It catalyses the reaction cytidine(967) in 16S rRNA + S-adenosyl-L-methionine = 5-methylcytidine(967) in 16S rRNA + S-adenosyl-L-homocysteine + H(+). Functionally, specifically methylates the cytosine at position 967 (m5C967) of 16S rRNA. This is Ribosomal RNA small subunit methyltransferase B from Proteus mirabilis (strain HI4320).